We begin with the raw amino-acid sequence, 81 residues long: Neuronatin (81 aa).

Belongs to the neuronatin family.

In terms of biological role, may participate in the maintenance of segment identity in the hindbrain and pituitary development, and maturation or maintenance of the overall structure of the nervous system. May function as a regulatory subunit of ion channels. The protein is Neuronatin (NNAT) of Sus scrofa (Pig).